We begin with the raw amino-acid sequence, 152 residues long: MRLHELKPNEGATHKKKRVGRGIGSGHGKTSTKGQKGQTSRSGDSKLPARFEGGQTPFIMRIPKRGFKNPSKIEYEIVNLKALENKFNENEEVNPQTLKEKGLVKKGECVKILGDGQLTKKLTVKAHAFSASAEEKIKSVGGIAEKITAETT.

Residues 1–55 (MRLHELKPNEGATHKKKRVGRGIGSGHGKTSTKGQKGQTSRSGDSKLPARFEGGQ) form a disordered region. Polar residues predominate over residues 28–42 (GKTSTKGQKGQTSRS).

The protein belongs to the universal ribosomal protein uL15 family. As to quaternary structure, part of the 50S ribosomal subunit.

Functionally, binds to the 23S rRNA. The polypeptide is Large ribosomal subunit protein uL15 (Sulfurihydrogenibium sp. (strain YO3AOP1)).